Here is a 693-residue protein sequence, read N- to C-terminus: Elongation factor G (693 aa).

The region spanning 6-286 (KYTRNIGIAA…AICRYLPSPI (281 aa)) is the tr-type G domain. GTP is bound by residues 15-22 (AHIDAGKT), 83-87 (DTPGH), and 137-140 (NKMD).

It belongs to the TRAFAC class translation factor GTPase superfamily. Classic translation factor GTPase family. EF-G/EF-2 subfamily.

It localises to the cytoplasm. In terms of biological role, catalyzes the GTP-dependent ribosomal translocation step during translation elongation. During this step, the ribosome changes from the pre-translocational (PRE) to the post-translocational (POST) state as the newly formed A-site-bound peptidyl-tRNA and P-site-bound deacylated tRNA move to the P and E sites, respectively. Catalyzes the coordinated movement of the two tRNA molecules, the mRNA and conformational changes in the ribosome. The chain is Elongation factor G from Karelsulcia muelleri (strain GWSS) (Sulcia muelleri).